Consider the following 429-residue polypeptide: Zinc metalloproteinase nas-17 (429 aa).

The first 21 residues, 1–21 (MFLRPSTLLLTLFLALVAGSA), serve as a signal peptide directing secretion. N-linked (GlcNAc...) asparagine glycosylation occurs at N54. One can recognise a Peptidase M12A domain in the interval 62-251 (RQITKIWKKW…VNINVRYSCG (190 aa)). Disulfide bonds link C104–C250, C125–C144, C252–C272, and C274–C283. A Zn(2+)-binding site is contributed by H152. Residue E153 is part of the active site. 2 residues coordinate Zn(2+): H156 and H162. One can recognise an EGF-like domain in the interval 245 to 284 (NVRYSCGCAKSLTCENGGYTNPSNCATCVCPTGFAGTLCN).

It depends on Zn(2+) as a cofactor.

It is found in the secreted. Metalloprotease. This is Zinc metalloproteinase nas-17 (nas-17) from Caenorhabditis elegans.